The sequence spans 322 residues: Chromoplast-specific carotenoid-associated protein, chromoplastic (322 aa).

Residues 1-58 (MAFVSQFNQLPCKTLALNPPQPQLTSKPSVFPIASIGATARAAAGKSLISVRPAFKVR) constitute a chromoplast transit peptide. A disordered region spans residues 67-88 (GEDKDEKYGDDSSVAVAEKEEE).

Belongs to the PAP/fibrillin family. Expressed in corollas. Not detected in fruits, stems, leaves, and roots.

It localises to the plastid. The protein resides in the chromoplast. In terms of biological role, may be involved in carotenoid sequestration within chromoplasts. The sequence is that of Chromoplast-specific carotenoid-associated protein, chromoplastic (CHRC) from Cucumis sativus (Cucumber).